The following is a 196-amino-acid chain: Glycerol-3-phosphate acyltransferase (196 aa).

4 helical membrane-spanning segments follow: residues 3-23 (NAVF…ILVS), 78-98 (VGVV…PVFY), 112-132 (VLLA…IVVF), and 154-174 (WLLL…LLLI).

It belongs to the PlsY family. Probably interacts with PlsX.

It is found in the cell inner membrane. The catalysed reaction is an acyl phosphate + sn-glycerol 3-phosphate = a 1-acyl-sn-glycero-3-phosphate + phosphate. It participates in lipid metabolism; phospholipid metabolism. Functionally, catalyzes the transfer of an acyl group from acyl-phosphate (acyl-PO(4)) to glycerol-3-phosphate (G3P) to form lysophosphatidic acid (LPA). This enzyme utilizes acyl-phosphate as fatty acyl donor, but not acyl-CoA or acyl-ACP. The chain is Glycerol-3-phosphate acyltransferase from Methylobacillus flagellatus (strain ATCC 51484 / DSM 6875 / VKM B-1610 / KT).